Reading from the N-terminus, the 158-residue chain is Snaclec flavocetin-A subunit alpha (158 aa).

An N-terminal signal peptide occupies residues Met1–Ala23. 3 disulfides stabilise this stretch: Cys27–Cys38, Cys55–Cys152, and Cys127–Cys144. The 120-residue stretch at Tyr34 to Lys153 folds into the C-type lectin domain.

This sequence belongs to the snaclec family. Tetramer of heterodimers of alpha and beta subunits (alphabeta)(4); disulfide-linked. In terms of tissue distribution, expressed by the venom gland.

It localises to the secreted. Its function is as follows. Strong platelet aggregation inhibitor. Binds specifically to platelet glycoprotein Ibalpha (GP1BA) with high affinity and inhibits vWF-dependent platelet aggregation. Has also been observed to induce small agglutinates in washed platelets by binding to GPIb. In Protobothrops flavoviridis (Habu), this protein is Snaclec flavocetin-A subunit alpha.